Consider the following 291-residue polypeptide: Succinate--CoA ligase [ADP-forming] subunit alpha 1 (291 aa).

Residues 20-23 (TGFQ), Lys46, and 99-101 (VTE) contribute to the CoA site. Position 162 (Tyr162) interacts with substrate. His249 serves as the catalytic Tele-phosphohistidine intermediate.

This sequence belongs to the succinate/malate CoA ligase alpha subunit family. Heterotetramer of two alpha and two beta subunits.

It catalyses the reaction succinate + ATP + CoA = succinyl-CoA + ADP + phosphate. The catalysed reaction is GTP + succinate + CoA = succinyl-CoA + GDP + phosphate. The protein operates within carbohydrate metabolism; tricarboxylic acid cycle; succinate from succinyl-CoA (ligase route): step 1/1. Functionally, succinyl-CoA synthetase functions in the citric acid cycle (TCA), coupling the hydrolysis of succinyl-CoA to the synthesis of either ATP or GTP and thus represents the only step of substrate-level phosphorylation in the TCA. The alpha subunit of the enzyme binds the substrates coenzyme A and phosphate, while succinate binding and nucleotide specificity is provided by the beta subunit. The sequence is that of Succinate--CoA ligase [ADP-forming] subunit alpha 1 from Archaeoglobus fulgidus (strain ATCC 49558 / DSM 4304 / JCM 9628 / NBRC 100126 / VC-16).